Consider the following 232-residue polypeptide: Orotate phosphoribosyltransferase (232 aa).

5-phospho-alpha-D-ribose 1-diphosphate contacts are provided by residues Arg107, Lys108, Lys111, His113, and Glu133 to Ser141. Residue Thr137 participates in orotate binding.

It belongs to the purine/pyrimidine phosphoribosyltransferase family. PyrE subfamily. As to quaternary structure, homodimer. Requires Mg(2+) as cofactor.

It carries out the reaction orotidine 5'-phosphate + diphosphate = orotate + 5-phospho-alpha-D-ribose 1-diphosphate. It functions in the pathway pyrimidine metabolism; UMP biosynthesis via de novo pathway; UMP from orotate: step 1/2. Its function is as follows. Catalyzes the transfer of a ribosyl phosphate group from 5-phosphoribose 1-diphosphate to orotate, leading to the formation of orotidine monophosphate (OMP). The chain is Orotate phosphoribosyltransferase from Rhizobium meliloti (strain 1021) (Ensifer meliloti).